Consider the following 164-residue polypeptide: UPF0251 protein MM_1448 (164 aa).

Basic and acidic residues predominate over residues Gly-91–Arg-100. The interval Gly-91–Gly-123 is disordered. The segment covering Ala-104–Arg-115 has biased composition (gly residues).

The protein belongs to the UPF0251 family.

This chain is UPF0251 protein MM_1448, found in Methanosarcina mazei (strain ATCC BAA-159 / DSM 3647 / Goe1 / Go1 / JCM 11833 / OCM 88) (Methanosarcina frisia).